The following is a 242-amino-acid chain: 1-(5-phosphoribosyl)-5-[(5-phosphoribosylamino)methylideneamino] imidazole-4-carboxamide isomerase (242 aa).

The active-site Proton acceptor is Asp8. Asp129 serves as the catalytic Proton donor.

It belongs to the HisA/HisF family.

Its subcellular location is the cytoplasm. It carries out the reaction 1-(5-phospho-beta-D-ribosyl)-5-[(5-phospho-beta-D-ribosylamino)methylideneamino]imidazole-4-carboxamide = 5-[(5-phospho-1-deoxy-D-ribulos-1-ylimino)methylamino]-1-(5-phospho-beta-D-ribosyl)imidazole-4-carboxamide. It functions in the pathway amino-acid biosynthesis; L-histidine biosynthesis; L-histidine from 5-phospho-alpha-D-ribose 1-diphosphate: step 4/9. The chain is 1-(5-phosphoribosyl)-5-[(5-phosphoribosylamino)methylideneamino] imidazole-4-carboxamide isomerase from Clostridium botulinum (strain Okra / Type B1).